Consider the following 433-residue polypeptide: Enolase (433 aa).

Gln-167 provides a ligand contact to (2R)-2-phosphoglycerate. The active-site Proton donor is Glu-209. 3 residues coordinate Mg(2+): Asp-246, Glu-291, and Asp-318. (2R)-2-phosphoglycerate is bound by residues Lys-343, Arg-372, Ser-373, and Lys-394. Lys-343 (proton acceptor) is an active-site residue.

The protein belongs to the enolase family. In terms of assembly, component of the RNA degradosome, a multiprotein complex involved in RNA processing and mRNA degradation. Mg(2+) serves as cofactor.

The protein resides in the cytoplasm. It localises to the secreted. Its subcellular location is the cell surface. It catalyses the reaction (2R)-2-phosphoglycerate = phosphoenolpyruvate + H2O. Its pathway is carbohydrate degradation; glycolysis; pyruvate from D-glyceraldehyde 3-phosphate: step 4/5. In terms of biological role, catalyzes the reversible conversion of 2-phosphoglycerate (2-PG) into phosphoenolpyruvate (PEP). It is essential for the degradation of carbohydrates via glycolysis. The polypeptide is Enolase (Haemophilus ducreyi (strain 35000HP / ATCC 700724)).